The primary structure comprises 400 residues: CinA-like protein (400 aa).

This sequence belongs to the CinA family.

The polypeptide is CinA-like protein (Escherichia coli (strain K12 / MC4100 / BW2952)).